The chain runs to 31 residues: Cytochrome b6-f complex subunit 6 (31 aa).

The chain crosses the membrane as a helical span at residues 4–24 (IISYFGLLLATLTFTIVLFVG).

This sequence belongs to the PetL family. As to quaternary structure, the 4 large subunits of the cytochrome b6-f complex are cytochrome b6, subunit IV (17 kDa polypeptide, PetD), cytochrome f and the Rieske protein, while the 4 small subunits are PetG, PetL, PetM and PetN. The complex functions as a dimer.

The protein localises to the plastid. It is found in the chloroplast thylakoid membrane. Component of the cytochrome b6-f complex, which mediates electron transfer between photosystem II (PSII) and photosystem I (PSI), cyclic electron flow around PSI, and state transitions. PetL is important for photoautotrophic growth as well as for electron transfer efficiency and stability of the cytochrome b6-f complex. The protein is Cytochrome b6-f complex subunit 6 of Staurastrum punctulatum (Green alga).